Reading from the N-terminus, the 2586-residue chain is Vitellogenin (2586 aa).

Residues 1–18 (MTTSTLLFVLAFVAGGLA) form the signal peptide. The Vitellogenin domain maps to 42-653 (YQPDKTYAYA…APGSFVPRAV (612 aa)). 2 disulfides stabilise this stretch: Cys-170-Cys-194 and Cys-2378-Cys-2515. In terms of domain architecture, VWFD spans 2353–2516 (RTATVVGGSE…AAWQEDRQCS (164 aa)).

Post-translationally, glycosylated. In terms of processing, may be modified covalently by lipidation. In terms of tissue distribution, expressed in the ovary and hepatopancrease of vitellogenic females. Not expressed in the muscle, heart and intestine of female or in the hepatopancrease of the male. Detected in the ovary and hemolymph of female (at protein level). Not detected in the female hepatopancreas or in the male hemolymph and testis (at protein level).

Functionally, precursor of the egg-yolk proteins that are sources of nutrients during embryonic development. The sequence is that of Vitellogenin from Penaeus merguiensis (Banana prawn).